A 313-amino-acid chain; its full sequence is Probable lysophospholipase L2 (313 aa).

Its subcellular location is the cell inner membrane. The enzyme catalyses a 1-acyl-sn-glycero-3-phosphocholine + H2O = sn-glycerol 3-phosphocholine + a fatty acid + H(+). In Haemophilus influenzae (strain ATCC 51907 / DSM 11121 / KW20 / Rd), this protein is Probable lysophospholipase L2 (pldB).